An 854-amino-acid chain; its full sequence is Protein asteroid (854 aa).

Residues 368-427 are disordered; it reads SEEECSDDEHSSSSDEKFSDVEEGEDQEEADNQDEEQQEENQDVDSGDEEEEEADEGLEL. A compositionally biased stretch (basic and acidic residues) spans 375–387; it reads DEHSSSSDEKFSD. Residues 388-427 show a composition bias toward acidic residues; sequence VEEGEDQEEADNQDEEQQEENQDVDSGDEEEEEADEGLEL.

The protein belongs to the asteroid family. Expressed in the proliferative tissues of embryos and in the mitotically active tissue anterior to the morphogenetic furrow in eye imaginal disks.

In terms of biological role, may function in EGF receptor signaling. May play a role in compound eye morphogenesis. In Drosophila melanogaster (Fruit fly), this protein is Protein asteroid (ast).